The chain runs to 898 residues: Vacuolar membrane protease (898 aa).

Over 1 to 14 (MGIVDYLVAAVSFR) the chain is Cytoplasmic. The helical transmembrane segment at 15–35 (TLPTTFVAVLVYLAIFISVLI) threads the bilayer. Over 36–342 (TDELPATPKD…LFGQALIVFP (307 aa)) the chain is Vacuolar. Residues Asn50, Asn103, and Asn110 are each glycosylated (N-linked (GlcNAc...) asparagine). Zn(2+) is bound by residues His139 and Asp151. Glu183 acts as the Proton acceptor in catalysis. Residue Glu184 participates in Zn(2+) binding. The N-linked (GlcNAc...) asparagine glycan is linked to Asn200. Zn(2+) is bound by residues Glu209 and His284. The helical transmembrane segment at 343–365 (LSAMITFNIVFLVVGPIMLALLV) threads the bilayer. Over 366 to 411 (TFDIVARHRRQEMIGGGYEEQGFFARAWTSFKSFRWVGGFWKHAKF) the chain is Cytoplasmic. The chain crosses the membrane as a helical span at residues 412 to 432 (WVALAVTVGLQVLLCVGYLYI). Asn433 is a topological domain (vacuolar). Residues 434-454 (PLIAYSSSHIVLLSFLSLAYL) traverse the membrane as a helical segment. Topologically, residues 455-479 (STYLVHNIPSPTDTYGSHLPEQQKQ) are cytoplasmic. Residues 480–500 (AALFQLYFFTWILLLAATVVG) form a helical membrane-spanning segment. Residues 501 to 509 (AKLSVGSFY) lie on the Vacuolar side of the membrane. Residues 510–530 (ILSLWNAVLFAACAIGSIAGL) form a helical membrane-spanning segment. At 531–593 (LSSHTVEGDA…PGGKEGEEVS (63 aa)) the chain is on the cytoplasmic side. Residues 594–614 (GAIGWWFVQFVLSVPAVVILV) traverse the membrane as a helical segment. Residues 615 to 635 (SQLALLMLAATEQTLADGSPA) lie on the Vacuolar side of the membrane. The helical transmembrane segment at 636–656 (VTVYGGASLMSVLAILPLAPF) threads the bilayer. The Cytoplasmic segment spans residues 657–664 (ACKLHRRV). A helical membrane pass occupies residues 665–685 (AYVALVVLIASTAYAWLVFPF). The Vacuolar portion of the chain corresponds to 686 to 898 (SERAPLKVFF…LVEGYKAFAV (213 aa)). Asn704, Asn733, and Asn764 each carry an N-linked (GlcNAc...) asparagine glycan.

It belongs to the peptidase M28 family. It depends on Zn(2+) as a cofactor.

It is found in the vacuole membrane. Functionally, may be involved in vacuolar sorting and osmoregulation. This chain is Vacuolar membrane protease, found in Schizophyllum commune (strain H4-8 / FGSC 9210) (Split gill fungus).